The following is a 206-amino-acid chain: Proteasome subunit beta 2 (206 aa).

A propeptide spans 1 to 10 (removed in mature form; by autocatalysis); it reads MLHLKEKLKG. Threonine 11 serves as the catalytic Nucleophile.

It belongs to the peptidase T1B family. The 20S proteasome core is composed of 14 alpha and 14 beta subunits that assemble into four stacked heptameric rings, resulting in a barrel-shaped structure. The two inner rings, each composed of seven catalytic beta subunits, are sandwiched by two outer rings, each composed of seven alpha subunits. The catalytic chamber with the active sites is on the inside of the barrel. Has a gated structure, the ends of the cylinder being occluded by the N-termini of the alpha-subunits. Is capped at one or both ends by the proteasome regulatory ATPase, PAN.

The protein localises to the cytoplasm. It carries out the reaction Cleavage of peptide bonds with very broad specificity.. Its activity is regulated as follows. The formation of the proteasomal ATPase PAN-20S proteasome complex, via the docking of the C-termini of PAN into the intersubunit pockets in the alpha-rings, triggers opening of the gate for substrate entry. Interconversion between the open-gate and close-gate conformations leads to a dynamic regulation of the 20S proteasome proteolysis activity. In terms of biological role, component of the proteasome core, a large protease complex with broad specificity involved in protein degradation. The protein is Proteasome subunit beta 2 of Pyrococcus furiosus (strain ATCC 43587 / DSM 3638 / JCM 8422 / Vc1).